The primary structure comprises 251 residues: Eukaryotic translation initiation factor 4E-3 (251 aa).

The disordered stretch occupies residues 200–251 (DSSARTSSTVKPRICLPAKDPAPVKEKGPAATTSPSNPGTEATGTSPATPTP). Positions 230–251 (ATTSPSNPGTEATGTSPATPTP) are enriched in polar residues.

This sequence belongs to the eukaryotic initiation factor 4E family. As to quaternary structure, eIF4F is a multi-subunit complex, the composition of which varies with external and internal environmental conditions. It is composed of at least eIF4A, eIF4E and eIF4G. eIF4E is also known to interact with other partners. Interacts with mxt. Component of the pid-1 variant of the PETISCO complex (also called the pid-3, erh-2, tofu-6, and ife-3 small RNA complex) containing at least pid-1, tofu-6, ife-3, pid-3, and erh-2, which is required for the biogenesis of a class of 21 nucleotide PIWI-interacting RNAs (piRNAs) that possess a uracil residue at the 5'-end (also called 21U-RNAs). Component of the tost-1 variant of the PETISCO complex (also called the pid-3, erh-2, tofu-6, and ife-3 small RNA complex) containing at least tost-1, tofu-6, ife-3, pid-3, and erh-2, which plays an essential role in embryogenesis. Within the pid-1 and tost-1 variants of the PETISCO complexes interacts with tofu-6 (via C-terminus). In contrast to the pid-1 variant of the PETISCO complex, the tost-1 variant of the PETISCO complex plays a minor role in the biogenesis of 21U-RNAs. In terms of tissue distribution, highly expressed in the germline (at protein level).

The protein localises to the cytoplasmic granule. The protein resides in the cytoplasm. It localises to the perinuclear region. Functionally, recognizes and binds the 7-methylguanosine-containing mRNA cap during an early step in the initiation of protein synthesis and facilitates ribosome binding by inducing the unwinding of the mRNAs secondary structures. All 5 eIF4E proteins bind monomethyl cap structures. Only ife-1, ife-2 and ife-5 bind trimethyl cap structures which result from trans-splicing. Translation of trimethyl cap structure mRNAs may be regulated by intracellular redox state; disulfide bonds change the width and depth of the cap-binding cavity determining selectivity to mRNA caps. Ife-3 is essential for viability. Component of the pid-1 and tost-1 variants of the PETISCO complexes, which have roles in the biogenesis of a class of 21 nucleotide PIWI-interacting RNAs (piRNAs) that possess a uracil residue at the 5'-end (also called 21U-RNAs) and embryogenesis, respectively. Within the pid-1 variant of the PETISCO complex binds to capped 21U-RNA precursor molecules, possibly playing a role in the processing of the 5' end of the molecules to promote binding of other complex components such as pid-3. However, it is not essential for the biogenesis of 21U-RNAs by itself. Within the tost-1 variant of the PETISCO complex binds to splice leader SL1 RNA fragments to possibly play a role in their processing. The sequence is that of Eukaryotic translation initiation factor 4E-3 from Caenorhabditis elegans.